The primary structure comprises 84 residues: uncharacterized protein (84 aa).

Functionally, this protein may be involved in virus assembly. This is an uncharacterized protein from Saccharolobus solfataricus (Sulfolobus solfataricus).